Here is a 78-residue protein sequence, read N- to C-terminus: Large ribosomal subunit protein bL28 (78 aa).

Positions 1-20 are disordered; it reads MSRVCQVTGKRPVTGNNRSH.

The protein belongs to the bacterial ribosomal protein bL28 family.

This is Large ribosomal subunit protein bL28 from Vibrio campbellii (strain ATCC BAA-1116).